The primary structure comprises 240 residues: Extracellular superoxide dismutase [Cu-Zn] (240 aa).

The N-terminal stretch at 1-18 (MLALLCSCLLLAAGASDA) is a signal peptide. Cystine bridges form between Cys-63–Cys-208 and Cys-125–Cys-207. A glycan (N-linked (GlcNAc...) asparagine) is linked at Asn-107. Cu cation-binding residues include His-114, His-116, and His-131. Residues His-131, His-139, His-142, and Asp-145 each contribute to the Zn(2+) site. Position 181 (His-181) interacts with Cu cation. Residues Lys-229 and Lys-230 are each glycosylated (N-linked (Glc) (glycation) lysine; in vitro).

It belongs to the Cu-Zn superoxide dismutase family. In terms of assembly, homotetramer. Directly interacts with ATP7A; this interaction is copper-dependent and is required for SOD3 activity. The cofactor is Cu cation. It depends on Zn(2+) as a cofactor. In terms of tissue distribution, expressed in blood vessels, heart, lung, kidney and placenta. Major SOD isoenzyme in extracellular fluids such as plasma, lymph and synovial fluid.

It is found in the secreted. The protein localises to the extracellular space. The protein resides in the golgi apparatus. Its subcellular location is the trans-Golgi network. The catalysed reaction is 2 superoxide + 2 H(+) = H2O2 + O2. In terms of biological role, protect the extracellular space from toxic effect of reactive oxygen intermediates by converting superoxide radicals into hydrogen peroxide and oxygen. The sequence is that of Extracellular superoxide dismutase [Cu-Zn] (SOD3) from Homo sapiens (Human).